The chain runs to 130 residues: Small ribosomal subunit protein uS9 (130 aa).

The tract at residues 105–130 (TRDPRMKERKKYGLKKARRAPQFSKR) is disordered. Over residues 111 to 130 (KERKKYGLKKARRAPQFSKR) the composition is skewed to basic residues.

Belongs to the universal ribosomal protein uS9 family.

The polypeptide is Small ribosomal subunit protein uS9 (Acetivibrio thermocellus (strain ATCC 27405 / DSM 1237 / JCM 9322 / NBRC 103400 / NCIMB 10682 / NRRL B-4536 / VPI 7372) (Clostridium thermocellum)).